Consider the following 278-residue polypeptide: HCLS1-associated protein X-1 (278 aa).

N-acetylserine is present on Ser-2. The interval 2–43 (SVFDLFRGFFGFPGPRSHRDPFFGGMTRDDDDDEDDEEEEDS) is required for localization in mitochondria. Disordered stretches follow at residues 15-50 (GPRS…GRES) and 99-262 (LPSH…ALDD). The span at 30-43 (DDDDDEDDEEEEDS) shows a compositional bias: acidic residues. The tract at residues 113–278 (TPGVRLREGQ…LLLGRWFRSR (166 aa)) is involved in HCLS1 binding. Over residues 132–152 (PDSHQPRIFEGVLESHAKPES) the composition is skewed to basic and acidic residues. The segment at 174-205 (VSPHSRAREDKDLDSQVSQEGLGPLLQPQPKS) is involved in CASP9 binding. The segment at 175 to 246 (SPHSRAREDK…TTVTHQEAHD (72 aa)) is involved in GNA13 binding. A required for localization in sarcoplasmic reticulum region spans residues 182 to 278 (EDKDLDSQVS…LLLGRWFRSR (97 aa)). Positions 183–278 (DKDLDSQVSQ…LLLGRWFRSR (96 aa)) are involved in PKD2 binding. Phosphoserine is present on residues Ser-188 and Ser-191. The tract at residues 202–224 (QPKSYFKSISVTKITKPDGTVEE) is involved in PLN binding. An involved in ATP2A2 binding region spans residues 202 to 244 (QPKSYFKSISVTKITKPDGTVEEHRTVVDSEGRRETTVTHQEA). Residues 209–278 (SISVTKITKP…LLLGRWFRSR (70 aa)) form a mediates interaction with UCP3 region. Positions 216 to 254 (TKPDGTVEEHRTVVDSEGRRETTVTHQEAHDSSRSDPDP) are enriched in basic and acidic residues. Residues 269-278 (LLLGRWFRSR) are required for ITGB6 binding.

Belongs to the HAX1 family. As to quaternary structure, interacts with ABCB1, ABCB4 and ABCB11. Directly associates with HCLS1/HS1, through binding to its N-terminal region. Interacts with CTTN. Interacts with PKD2. Interacts with GNA13. Interacts with CASP9. Interacts with ITGB6. Interacts with PLN and ATP2A2; these interactions are inhibited by calcium. Interacts with GRB7. Interacts (via C-terminus) with XIAP/BIRC4 (via BIR 2 domain and BIR 3 domain) and this interaction blocks ubiquitination of XIAP/BIRC4. Interacts with TPC2. Interacts with KCNC3. Interacts with XPO1. Interacts with RNF217. Interacts with UCP3; the interaction is direct and calcium-dependent. Interacts with MAPRE2; this interaction regulates cell migration in keratinocytes. In terms of tissue distribution, present in striated muscles (at protein level).

The protein localises to the mitochondrion matrix. It is found in the endoplasmic reticulum. The protein resides in the nucleus membrane. Its subcellular location is the cytoplasmic vesicle. It localises to the cytoplasm. The protein localises to the cell cortex. It is found in the cell membrane. The protein resides in the sarcoplasmic reticulum. Its subcellular location is the P-body. It localises to the nucleus. Its function is as follows. Recruits the Arp2/3 complex to the cell cortex and regulates reorganization of the cortical actin cytoskeleton via its interaction with KCNC3 and the Arp2/3 complex. Slows down the rate of inactivation of KCNC3 channels. Promotes GNA13-mediated cell migration. Involved in the clathrin-mediated endocytosis pathway. May be involved in internalization of ABC transporters such as ABCB11. May inhibit CASP9 and CASP3. Promotes cell survival. May regulate intracellular calcium pools. In Rattus norvegicus (Rat), this protein is HCLS1-associated protein X-1 (Hax1).